The primary structure comprises 461 residues: Photosynthetic NDH subunit of subcomplex B 1, chloroplastic (461 aa).

The N-terminal 44 residues, 1–44 (MASSLPLLPKPISPFFKTPPFSTSKPLVFLNFQTRLTSRSSDVS), are a transit peptide targeting the chloroplast. Residues 66 to 90 (NEYGSLFADGKQDEDPRPPDNPDNP) form a disordered region. A compositionally biased stretch (basic and acidic residues) spans 75–85 (GKQDEDPRPPD).

Part of the chloroplast NDH complex, composed of a mixture of chloroplast and nucleus encoded subunits. Component of the NDH subcomplex B, at least composed of PnsB1, PnsB2, PnsB3, PnsB4 and PnsB5.

The protein localises to the plastid. Its subcellular location is the chloroplast thylakoid membrane. Its function is as follows. NDH shuttles electrons from NAD(P)H:plastoquinone, via FMN and iron-sulfur (Fe-S) centers, to quinones in the photosynthetic chain and possibly in a chloroplast respiratory chain. The immediate electron acceptor for the enzyme in this species is believed to be plastoquinone. Couples the redox reaction to proton translocation, and thus conserves the redox energy in a proton gradient. This Arabidopsis thaliana (Mouse-ear cress) protein is Photosynthetic NDH subunit of subcomplex B 1, chloroplastic.